A 513-amino-acid polypeptide reads, in one-letter code: MELEFRSPSSPSEWAITSTITLLFLILLRKILKPKTPTPNLPPGPKKLPLIGNIHQLIGGIPHQKMRDLSQIHGPIMHLKLGELENVIISSKEAAEKILKTHDVLFAQRPQMIVAKSVTYDFHDITFSPYGDYWRQLRKITMIELLAAKRVLSFRAIREEETTKLVELIRGFQSGESINFTRMIDSTTYGITSRAACGKIWEGENLFISSLEKIMFEVGSGISFADAYPSVKLLKVFSGIRIRVDRLQKNIDKIFESIIEEHREERKGRKKGEDDLDLVDVLLNLQESGTLEIPLSDVTIKAVIMDMFVAGVDTSAATTEWLMSELIKNPEVMKKAQAEIREKFKGKASIDEADLQDLHYLKLVIKETFRLHPSVPLLVPRECRESCVIEGYDIPVKTKIMVNAWAMGRDTKYWGEDAEKFKPERFIDSPIDFKGHNFEYLPFGSGRRSCPGMAFGVANVEIAVAKLLYHFDWRLGDGMVPENLDMTEKIGGTTRRLSELYIIPTPYVPQNSA.

Residues 12 to 28 traverse the membrane as a helical; Signal-anchor for type II membrane protein segment; it reads SEWAITSTITLLFLILL. Position 450 (C450) interacts with heme.

This sequence belongs to the cytochrome P450 family. Requires heme as cofactor. As to expression, expressed in mature seeds.

It is found in the membrane. It carries out the reaction (-)-casbene + reduced [NADPH--hemoprotein reductase] + O2 = 8-hydroxycasbene + oxidized [NADPH--hemoprotein reductase] + H2O + H(+). The enzyme catalyses 4-hydroxycasbene + reduced [NADPH--hemoprotein reductase] + O2 = 4,8-dihydroxycasbene + oxidized [NADPH--hemoprotein reductase] + H2O + H(+). The catalysed reaction is 4,8-dihydroxycasbene + reduced [NADPH--hemoprotein reductase] + O2 = 4,5,8-trihydroxycasbene + oxidized [NADPH--hemoprotein reductase] + H2O + H(+). It participates in secondary metabolite biosynthesis; terpenoid biosynthesis. Functionally, involved in the biosynthesis of macrocyclic lathyrane type diterpenoids (also called Euphorbia factors) natural products, including the cyclization route from casbene to jolkinol C, a precursor for ingenol mebutate that is used to treat actinic keratosis, a precancerous skin condition. Catalyzes the hydroxylation of (-)-casbene and 4-hydroxycasbene to produce 8-hydroxycasbene and 4,8-dihydroxycasbene, respectively. Also mediates the formation of 4-hydroxy-8-ketocasbene from 4,8-dihydroxycasbene. Together with ADH1, triggers the biosynthesis of 8-ketocasbene from 8-hydroxycasbene. The chain is Cytochrome P450 71D445 from Euphorbia lathyris (Caper spurge).